Reading from the N-terminus, the 303-residue chain is Diaminopimelate epimerase (303 aa).

Positions 15, 47, and 67 each coordinate substrate. Catalysis depends on Cys-76, which acts as the Proton donor. Substrate is bound by residues 77–78 (GN), Asn-163, Asn-197, and 215–216 (ER). Cys-224 (proton acceptor) is an active-site residue. 225-226 (GS) is a substrate binding site. Residues 279-303 (DPATGEWSRDTQGLQGSGNADRGTA) form a disordered region.

It belongs to the diaminopimelate epimerase family. In terms of assembly, homodimer.

Its subcellular location is the cytoplasm. It carries out the reaction (2S,6S)-2,6-diaminopimelate = meso-2,6-diaminopimelate. The protein operates within amino-acid biosynthesis; L-lysine biosynthesis via DAP pathway; DL-2,6-diaminopimelate from LL-2,6-diaminopimelate: step 1/1. Its function is as follows. Catalyzes the stereoinversion of LL-2,6-diaminopimelate (L,L-DAP) to meso-diaminopimelate (meso-DAP), a precursor of L-lysine and an essential component of the bacterial peptidoglycan. This is Diaminopimelate epimerase from Brucella canis (strain ATCC 23365 / NCTC 10854 / RM-666).